The chain runs to 585 residues: MVLPELLVILAEWVLYRLLAKSCYRAARKLRGYGFQLKNLLSLSKTQSLHNNSQHHLHNHHQQNHPNQTLQDSLDPLFPSLTKYQELLLDKNRACSVSSDHYRDTFFCDIDGVLLRQHSSKHFHTFFPYFMLVAFEGGSIIRAILLLLSCSFLWTLQQETKLRVLSFITFSGLRVKDMDNVSRSVLPKFFLENLNIQVYDIWARTEYSKVVFTSLPQVLVERFLREHLNADDVIGTKLQEIKVMGRKFYTGLASGSGFVLKHKSAEDYFFDSKKKPALGIGSSSSPQDHIFISICKEAYFWNEEESMSKNNALPRERYPKPLIFHDGRLAFLPTPLATLAMFIWLPIGFLLAVFRISVGVFLPYHVANFLASMSGVRITFKTHNLNNGRPEKGNSGVLYVCNHRTLLDPVFLTTSLGKPLTAVTYSLSKFSEFIAPLKTVSLKRDRKKDGEAMQRLLSKGDLVVCPEGTTCREPYLLRFSPLFAELTEDIVPVAVDARVSMFYGTTASGLKCLDPIFFLMNPRPVYCLEILKKLPKEMTCAGGKSSFEVANFIQGELARVLGFECTNLTRRDKYLVLAGNEGIVR.

3 helical membrane-spanning segments follow: residues 126 to 146, 334 to 354, and 356 to 376; these read FFPY…AILL, TPLA…LAVF, and ISVG…MSGV. The short motif at 403 to 408 is the HXXXXD motif element; the sequence is HRTLLD.

This sequence belongs to the GPAT/DAPAT family. Highly expressed in developing siliques and flower buds. Weakly or not expressed in roots, seedlings and leaves.

The protein resides in the membrane. It localises to the mitochondrion. The enzyme catalyses sn-glycerol 3-phosphate + an acyl-CoA = a 1-acyl-sn-glycero-3-phosphate + CoA. Its pathway is phospholipid metabolism; CDP-diacylglycerol biosynthesis; CDP-diacylglycerol from sn-glycerol 3-phosphate: step 1/3. Esterifies acyl-group from acyl-ACP to the sn-1 position of glycerol-3-phosphate, an essential step in glycerolipid biosynthesis. Involved in pollen development, by being required for tapetum differentiation and male fertility. In addition to the sporophytic effect, it also exerts a gametophytic effect on pollen performance. The polypeptide is Glycerol-3-phosphate acyltransferase 1 (GPAT1) (Arabidopsis thaliana (Mouse-ear cress)).